A 351-amino-acid polypeptide reads, in one-letter code: Molybdenum import ATP-binding protein ModC (351 aa).

The 229-residue stretch at 1 to 229 (MLQINVKKQL…PIFAPWKGES (229 aa)) folds into the ABC transporter domain. 31–38 (GLSGSGKT) contributes to the ATP binding site. A Mop domain is found at 289–351 (QTSIRNILRG…YVQIKAVSVM (63 aa)).

Belongs to the ABC transporter superfamily. Molybdate importer (TC 3.A.1.8) family. In terms of assembly, the complex is composed of two ATP-binding proteins (ModC), two transmembrane proteins (ModB) and a solute-binding protein (ModA).

Its subcellular location is the cell inner membrane. It carries out the reaction molybdate(out) + ATP + H2O = molybdate(in) + ADP + phosphate + H(+). In terms of biological role, part of the ABC transporter complex ModABC involved in molybdenum import. Responsible for energy coupling to the transport system. This is Molybdenum import ATP-binding protein ModC from Haemophilus influenzae (strain ATCC 51907 / DSM 11121 / KW20 / Rd).